The following is a 210-amino-acid chain: MKKEIASHLLEIGAVFLQPNDPFTWSSGMKSPIYCDNRLTLSYPKVRQAIAAGLEELIKEHFPTVEIIAGTATAGIAHAAWVSDRMDLPMCYVRSKAKGHGKGNQIEGKAEKGQKVVVVEDLISTGGSAITCVEALREAGCEVLGIVSIFTYELEAGKEKLEAANVASYSLSDYSALTEVAAEKGMIGQAETKKLQEWRKNPANEAWITA.

5-phospho-alpha-D-ribose 1-diphosphate contacts are provided by residues R94, K98, H100, and 120–128 (EDLISTGGS). S124 serves as a coordination point for orotate.

Belongs to the purine/pyrimidine phosphoribosyltransferase family. PyrE subfamily. As to quaternary structure, homodimer. The cofactor is Mg(2+).

The catalysed reaction is orotidine 5'-phosphate + diphosphate = orotate + 5-phospho-alpha-D-ribose 1-diphosphate. Its pathway is pyrimidine metabolism; UMP biosynthesis via de novo pathway; UMP from orotate: step 1/2. Its function is as follows. Catalyzes the transfer of a ribosyl phosphate group from 5-phosphoribose 1-diphosphate to orotate, leading to the formation of orotidine monophosphate (OMP). The chain is Orotate phosphoribosyltransferase from Bacillus cereus (strain ATCC 14579 / DSM 31 / CCUG 7414 / JCM 2152 / NBRC 15305 / NCIMB 9373 / NCTC 2599 / NRRL B-3711).